The sequence spans 80 residues: Phage shock protein G (80 aa).

The next 2 membrane-spanning stretches (helical) occupy residues 5–25 (LFVIGFFVMLMVTGVSLLGII) and 41–61 (LALMIKLLPWLLLAIAVVWVI).

Its subcellular location is the cell inner membrane. Its function is as follows. Effector of the phage shock response. The protein is Phage shock protein G (pspG) of Escherichia coli (strain K12).